A 118-amino-acid chain; its full sequence is Pterin-4-alpha-carbinolamine dehydratase (118 aa).

It belongs to the pterin-4-alpha-carbinolamine dehydratase family.

The enzyme catalyses (4aS,6R)-4a-hydroxy-L-erythro-5,6,7,8-tetrahydrobiopterin = (6R)-L-erythro-6,7-dihydrobiopterin + H2O. Its function is as follows. Involved in tetrahydrobiopterin biosynthesis. Seems to both prevent the formation of 7-pterins and accelerate the formation of quinonoid-BH2. May also have a positive regulatory role in the expression of phhA. This chain is Pterin-4-alpha-carbinolamine dehydratase (phhB), found in Pseudomonas syringae pv. tomato (strain ATCC BAA-871 / DC3000).